The chain runs to 722 residues: Pentatricopeptide repeat-containing protein At4g14820 (722 aa).

13 PPR repeats span residues 75–109 (ESIVFNPFLRDLSRSSEPRATILFYQRIRHVGGRL), 110–140 (DQFSFLPILKAVSKVSALFEGMELHGVAFKI), 145–175 (DPFVETGFMDMYASCGRINYARNVFDEMSHR), 176–210 (DVVTWNTMIERYCRFGLVDEAFKLFEEMKDSNVMP), 211–245 (DEMILCNIVSACGRTGNMRYNRAIYEFLIENDVRM), 246–276 (DTHLLTALVTMYAGAGCMDMAREFFRKMSVR), 277–307 (NLFVSTAMVSGYSKCGRLDDAQVIFDQTEKK), 308–342 (DLVCWTTMISAYVESDYPQEALRVFEEMCCSGIKP), 343–377 (DVVSMFSVISACANLGILDKAKWVHSCIHVNGLES), 378–408 (ELSINNALINMYAKCGGLDATRDVFEKMPRR), 409–443 (NVVSWSSMINALSMHGEASDALSLFARMKQENVEP), 444–479 (NEVTFVGVLYGCSHSGLVEEGKKIFASMTDEYNITP), and 480–514 (KLEHYGCMVDLFGRANLLREALEVIESMPVASNVV). The type E motif stretch occupies residues 515–590 (IWGSLMSACR…EKGLSRIDQN (76 aa)). The type E(+) motif stretch occupies residues 591–621 (GKSHEFLIGDKRHKQSNEIYAKLDEVVSKLK). A type DYW motif region spans residues 622-722 (LAGYVPDCGS…NGLCSCRDYW (101 aa)).

This sequence belongs to the PPR family. PCMP-H subfamily.

The chain is Pentatricopeptide repeat-containing protein At4g14820 (PCMP-H3) from Arabidopsis thaliana (Mouse-ear cress).